Reading from the N-terminus, the 285-residue chain is 2-dehydro-3-deoxyphosphooctonate aldolase (285 aa).

Belongs to the KdsA family.

The protein localises to the cytoplasm. It catalyses the reaction D-arabinose 5-phosphate + phosphoenolpyruvate + H2O = 3-deoxy-alpha-D-manno-2-octulosonate-8-phosphate + phosphate. Its pathway is carbohydrate biosynthesis; 3-deoxy-D-manno-octulosonate biosynthesis; 3-deoxy-D-manno-octulosonate from D-ribulose 5-phosphate: step 2/3. The protein operates within bacterial outer membrane biogenesis; lipopolysaccharide biosynthesis. This chain is 2-dehydro-3-deoxyphosphooctonate aldolase, found in Acidovorax sp. (strain JS42).